A 276-amino-acid chain; its full sequence is Undecaprenyl-diphosphatase (276 aa).

6 helical membrane-spanning segments follow: residues 43 to 63 (RAMA…VWEF), 85 to 105 (ANLL…ADLI), 109 to 129 (LFNP…MLWA), 183 to 203 (AATE…AVYS), 214 to 234 (SDLP…MIAV), and 249 to 269 (FAWY…FGWV).

The protein belongs to the UppP family.

Its subcellular location is the cell inner membrane. It catalyses the reaction di-trans,octa-cis-undecaprenyl diphosphate + H2O = di-trans,octa-cis-undecaprenyl phosphate + phosphate + H(+). In terms of biological role, catalyzes the dephosphorylation of undecaprenyl diphosphate (UPP). Confers resistance to bacitracin. The sequence is that of Undecaprenyl-diphosphatase from Pseudomonas putida (strain W619).